We begin with the raw amino-acid sequence, 1080 residues long: Myocardin-related transcription factor B (1080 aa).

An RPEL 1 repeat occupies 40 to 65; it reads EVLQLRLQQRRTREQLVDQGIMPPLK. Ser-66 carries the phosphoserine modification. RPEL repeat units follow at residues 84–109 and 128–153; these read NFLK…EETF and DDLN…PVDS. Disordered stretches follow at residues 170–222, 234–311, 352–384, and 477–501; these read THGE…AQFT, TPLT…EPQM, PIKT…SSLD, and PHVE…LSTD. Composition is skewed to polar residues over residues 188-200 and 240-259; these read QPAS…SAAS and QPPT…SSAK. The segment covering 272–287 has biased composition (basic and acidic residues); it reads NPNDKHRSKKCKDPKP. Residues 358–370 show a composition bias toward low complexity; sequence NSSSGSNSGSSSS. In terms of domain architecture, SAP spans 383-417; sequence LDDLKVSELKTELKLRGLPVSGTKPDLIERLKPYQ. Phosphoserine is present on residues Ser-531, Ser-535, and Ser-537. The stretch at 539–594 forms a coiled coil; the sequence is SSSTLSTLELDAAEKDRKLQEKEKQIEELKRKLEQEQKLVEVLKMQLEVEKRGQQR. Residues 557–585 form a required for interaction with itself and with MRTFA region; it reads LQEKEKQIEELKRKLEQEQKLVEVLKMQL. Disordered regions lie at residues 588 to 646 and 794 to 846; these read EKRG…SVGQ and LQYQ…PQQF. Residues 595 to 606 are compositionally biased toward pro residues; that stretch reads PPDPQPSDPPHP. Lys-622 is covalently cross-linked (Glycyl lysine isopeptide (Lys-Gly) (interchain with G-Cter in SUMO1)). Positions 794-821 are enriched in polar residues; the sequence is LQYQRQPGPTNQQPFVSKTSNPALQSRT. The residue at position 913 (Ser-913) is a Phosphoserine. Residues 969-988 are disordered; sequence GTLPSATDTGPLQNSSEDRE. Over residues 972 to 983 the composition is skewed to polar residues; that stretch reads PSATDTGPLQNS.

As to quaternary structure, interacts with MRTFA and SRF. In terms of processing, O-glycosylated. As to expression, widely expressed. High expression in heart, brain and testis. Lower expression in lung, liver and kidney.

The protein resides in the nucleus. Functionally, acts as a transcriptional coactivator of serum response factor (SRF). Required for skeletal myogenic differentiation. This Mus musculus (Mouse) protein is Myocardin-related transcription factor B (Mrtfb).